Here is a 695-residue protein sequence, read N- to C-terminus: Hypersensitivity response secretion protein HrpI (695 aa).

Helical transmembrane passes span 21 to 38, 45 to 61, 68 to 92, 111 to 135, 203 to 223, 244 to 262, and 311 to 327; these read LVGA…ITPL, VLIA…IMLA, LAFS…VSTT, FVVG…FLVI, AIAS…IGVL, GLIA…GMII, and VFIT…LLQL.

It belongs to the FHIPEP (flagella/HR/invasion proteins export pore) family.

It is found in the cell inner membrane. Functionally, involved in the secretion of harpin-pss; a proteinaceous elicitor of the hypersensitivity response in plants. This is Hypersensitivity response secretion protein HrpI (hrpI) from Pseudomonas syringae pv. syringae.